Reading from the N-terminus, the 66-residue chain is Beta-toxin Css6 (66 aa).

In terms of domain architecture, LCN-type CS-alpha/beta spans 1 to 66; the sequence is KEGYLVNSYT…VWPLPNKTCN (66 aa). 4 disulfide bridges follow: Cys12–Cys65, Cys16–Cys41, Cys25–Cys46, and Cys29–Cys48. At Asn66 the chain carries Asparagine amide.

It belongs to the long (4 C-C) scorpion toxin superfamily. Sodium channel inhibitor family. Beta subfamily. In terms of tissue distribution, expressed by the venom gland.

It is found in the secreted. In terms of biological role, beta toxins bind voltage-independently at site-4 of sodium channels (Nav) and shift the voltage of activation toward more negative potentials thereby affecting sodium channel activation and promoting spontaneous and repetitive firing. In Centruroides suffusus (Durango bark scorpion), this protein is Beta-toxin Css6.